A 178-amino-acid chain; its full sequence is Protein FLOWERING LOCUS T 1 (178 aa).

The protein belongs to the phosphatidylethanolamine-binding protein family. Expressed in leaves but not in shoot apex.

Involved in the regulation of vernalization and of flowering time. The chain is Protein FLOWERING LOCUS T 1 from Brachypodium distachyon (Purple false brome).